A 157-amino-acid polypeptide reads, in one-letter code: Phosphopantetheine adenylyltransferase (157 aa).

Substrate is bound at residue T10. Residues T10 to F11 and H18 each bind ATP. Positions 42, 74, and 88 each coordinate substrate. ATP contacts are provided by residues G89–R91, E99, and N124–S130.

It belongs to the bacterial CoaD family. In terms of assembly, homohexamer. Mg(2+) is required as a cofactor.

The protein localises to the cytoplasm. It catalyses the reaction (R)-4'-phosphopantetheine + ATP + H(+) = 3'-dephospho-CoA + diphosphate. It functions in the pathway cofactor biosynthesis; coenzyme A biosynthesis; CoA from (R)-pantothenate: step 4/5. Its function is as follows. Reversibly transfers an adenylyl group from ATP to 4'-phosphopantetheine, yielding dephospho-CoA (dPCoA) and pyrophosphate. In Helicobacter pylori (strain J99 / ATCC 700824) (Campylobacter pylori J99), this protein is Phosphopantetheine adenylyltransferase.